A 399-amino-acid polypeptide reads, in one-letter code: Protein shisa-8 (399 aa).

The signal sequence occupies residues 1–36; it reads MERAGARGQRCGRRSHGLPLALRLALLLAGSPSGRA. Residues 37 to 136 lie on the Extracellular side of the membrane; it reads GAPEEQEIAG…APRDPARERS (100 aa). The N-linked (GlcNAc...) asparagine glycan is linked to asparagine 73. The helical transmembrane segment at 137-157 threads the bilayer; it reads HTAVYAVCGVAALLVLVGIGA. Residues 158–399 are Cytoplasmic-facing; sequence RLGLERAHSP…STNSKAEVTV (242 aa). Disordered stretches follow at residues 207–248 and 378–399; these read GDGV…GGSL and FYSSAGRGPRHLSTNSKAEVTV. The span at 389-399 shows a compositional bias: polar residues; it reads LSTNSKAEVTV.

It belongs to the shisa family. Interacts with AMPAR subunits GRIA1 and GRIA2. Brain-specific. Highly expressed in cerebellum and olfactory bulb.

Its subcellular location is the membrane. Functionally, may regulate trafficking and current kinetics of AMPA-type glutamate receptor (AMPAR) at synapses. This chain is Protein shisa-8, found in Mus musculus (Mouse).